Here is a 404-residue protein sequence, read N- to C-terminus: Dihydrosphingosine 1-phosphate phosphatase YSR3 (404 aa).

The Lumenal portion of the chain corresponds to 1 to 86 (MTIIQTVTEL…PFRDVYFKYT (86 aa)). A glycan (N-linked (GlcNAc...) asparagine) is linked at asparagine 62. The chain crosses the membrane as a helical span at residues 87 to 107 (SLMGSHMFYVIVLPMPVWLGY). Residues 108 to 113 (RDLTRD) are Cytoplasmic-facing. Residues 114–134 (MIYVLGYSIYLSGYLKDYWCL) traverse the membrane as a helical segment. Residues 129–137 (KDYWCLPRP) form a phosphatase sequence motif I region. Over 135 to 154 (PRPKSPPVDRITLSEYTTKE) the chain is Lumenal. Residues 155 to 176 (YGAPSSHSANATAVSLLFFWRI) form a helical membrane-spanning segment. Residues 158-161 (PSSH) form a phosphatase sequence motif II region. Histidine 161 acts as the Proton donor in catalysis. At 177–182 (CLSDTL) the chain is on the cytoplasmic side. Residues 183 to 203 (VWPTKLLLLSLVIFYYLTLVF) traverse the membrane as a helical segment. Residues 204-215 (GRVYCGMHGMLD) lie on the Lumenal side of the membrane. The phosphatase sequence motif III stretch occupies residues 204–215 (GRVYCGMHGMLD). Catalysis depends on histidine 211, which acts as the Nucleophile. A helical transmembrane segment spans residues 216-236 (LFSGAAVGAICFFIRIWVVHA). Over 237–241 (LRNFQ) the chain is Cytoplasmic. Residues 242–262 (IGEHLWFPLLSVAWGLFILFN) traverse the membrane as a helical segment. The Lumenal portion of the chain corresponds to 263–319 (HVRPIDECPCFEDSVAFIGVVSGLDCSDWLTERYGWNLVCSRYASCGSKVFLRPLVG). A helical membrane pass occupies residues 320–340 (VASVIVWKDVISKTAVYTLLI). Residues 341 to 379 (KLLRFHDDRSEKVHFHNETSEEEECLLYSGVSKVEIVGR) lie on the Cytoplasmic side of the membrane. A helical membrane pass occupies residues 380-400 (FLIYAGIPTTVFLLCPVFFTW). Residues 401 to 404 (TNLR) are Lumenal-facing.

The protein belongs to the type 2 lipid phosphate phosphatase family.

It localises to the endoplasmic reticulum membrane. The catalysed reaction is sphinganine 1-phosphate + H2O = sphinganine + phosphate. Its function is as follows. Dihydrosphingosine 1-phosphate phosphatase required for efficient ceramide synthesis from exogenous sphingoid bases. Involved in endocytosis and calcium-mediated signaling. This chain is Dihydrosphingosine 1-phosphate phosphatase YSR3, found in Saccharomyces cerevisiae (strain ATCC 204508 / S288c) (Baker's yeast).